The chain runs to 330 residues: Olfactory receptor 5P70 (330 aa).

The Extracellular segment spans residues 1–28; it reads MAFLEDGNHTIVTEFILLGLTDDPVLRD. N-linked (GlcNAc...) asparagine glycosylation occurs at asparagine 8. The chain crosses the membrane as a helical span at residues 29–49; it reads ILFTIILCIYLVTVSGNLSTI. At 50–57 the chain is on the cytoplasmic side; the sequence is LLIRVSSQ. The helical transmembrane segment at 58 to 78 threads the bilayer; that stretch reads LHHPMYFFLSHLASVDIGISS. Residues 79–102 lie on the Extracellular side of the membrane; that stretch reads SVTPNMLANFLVKPNTISYIGCSI. Residues cysteine 100 and cysteine 192 are joined by a disulfide bond. Residues 103-123 traverse the membrane as a helical segment; the sequence is QFTSAVFLATVECFLLAAMAY. Over 124-136 the chain is Cytoplasmic; the sequence is DRFVAICNPLLYS. A helical transmembrane segment spans residues 137-157; the sequence is TKMSREACIQLVVGSYIQGLL. Residues 158–199 lie on the Extracellular side of the membrane; that stretch reads NASFFTLSFFSLIFCGPNRINHFYCDLAPLVELSCSDVTLAV. The helical transmembrane segment at 200–220 threads the bilayer; that stretch reads VITSISAGFITLTTVFVIAIS. Topologically, residues 221–240 are cytoplasmic; sequence YSCIFITIMKMHSTESRYKA. A helical transmembrane segment spans residues 241–261; the sequence is FSTCTSHLTAVTLFYGTTMFI. Topologically, residues 262-274 are extracellular; that stretch reads YVMPKSSYSTDQN. Residues 275 to 295 traverse the membrane as a helical segment; that stretch reads KVLSVFYMVVIPMLNPLIYSL. Residues 296–330 are Cytoplasmic-facing; it reads RNNEIKGALKRYLGKKIFSYGNLFCKTHYNDTHQV.

The protein belongs to the G-protein coupled receptor 1 family.

Its subcellular location is the cell membrane. Its function is as follows. Potential odorant receptor. The protein is Olfactory receptor 5P70 of Mus musculus (Mouse).